Reading from the N-terminus, the 66-residue chain is Large ribosomal subunit protein bL31 (66 aa).

Positions 16, 18, 36, and 39 each coordinate Zn(2+).

This sequence belongs to the bacterial ribosomal protein bL31 family. Type A subfamily. In terms of assembly, part of the 50S ribosomal subunit. Requires Zn(2+) as cofactor.

Binds the 23S rRNA. This Moorella thermoacetica (strain ATCC 39073 / JCM 9320) protein is Large ribosomal subunit protein bL31.